The sequence spans 182 residues: UPF0397 protein BA_2640/GBAA_2640/BAS2460 (182 aa).

5 helical membrane-spanning segments follow: residues 9–29 (VVAIGIGSALYGILGLWGFSI), 40–60 (AILTVFGALFGPVAGLLIGLI), 71–91 (WSIWWGWVISSGIIGFTMGFI), 114–134 (ITGLIGIVIAIIFAGAFDIIV), and 142–162 (IVIQVLGATIADVIVFLVLGL).

It belongs to the UPF0397 family.

It localises to the cell membrane. The sequence is that of UPF0397 protein BA_2640/GBAA_2640/BAS2460 from Bacillus anthracis.